The chain runs to 430 residues: DD-carboxypeptidase/endopeptidase Mpg (430 aa).

His295, Asp299, and His375 together coordinate Zn(2+).

This sequence belongs to the peptidase M23B family. In terms of assembly, monomer. The cofactor is Zn(2+). In terms of processing, likely to be synthesized as a proenzyme. The cleavage of the N-terminal domain is probably required for the activation of the enzyme.

It localises to the cell outer membrane. With respect to regulation, peptidoglycan (PG) degradation activity is completely inhibited by zinc chelating EDTA and phenanthroline. Functionally, has both endopeptidase and DD-carboxypeptidase activities. Degrades cell wall peptidoglycan (PG) to allow consummate expression of pili. Degrades N.gonorrhoeae and E.coli PG side chains in vitro. Required for proper piliation, which in turn is required for normal colony morphology, resistance to H(2)O(2) damage and defense against killing by human polymorphonuclear leukocytes (PMNs). Involved in type IV pilus biogenesis. Involved in resistance against non-oxidative killing by adherent CXCL8/IL8-primed human PMNs. Protects from killing by PMN-produced antimicrobial factors, which kill by a mechanism completely independent of reactive oxygen species (ROS) production of the PMNs. Provides protection against oxidative damage caused by peroxides H(2)O(2) and cumene hydroperoxide in vitro. This Neisseria gonorrhoeae (strain ATCC 700825 / FA 1090) protein is DD-carboxypeptidase/endopeptidase Mpg.